The sequence spans 48 residues: Small, acid-soluble spore protein N (48 aa).

The segment at 1–48 (MGINKKDGQPQYAPSHLGTKPVKYKRNKGEKFHDKSNGHPIVMQTKGE) is disordered. The segment covering 27 to 37 (NKGEKFHDKSN) has biased composition (basic and acidic residues).

It belongs to the SspN family.

The protein resides in the spore core. This Bacillus velezensis (strain DSM 23117 / BGSC 10A6 / LMG 26770 / FZB42) (Bacillus amyloliquefaciens subsp. plantarum) protein is Small, acid-soluble spore protein N.